A 388-amino-acid polypeptide reads, in one-letter code: S-adenosylmethionine synthase (388 aa).

His14 is a binding site for ATP. Asp16 contacts Mg(2+). Residue Glu42 coordinates K(+). Residues Glu55 and Gln98 each contribute to the L-methionine site. The tract at residues 98 to 108 (QSAEISSAVDQ) is flexible loop. ATP contacts are provided by residues 166-168 (DGK), Asp242, 248-249 (RK), Ala265, and Lys269. Asp242 contacts L-methionine. Residue Lys273 coordinates L-methionine.

This sequence belongs to the AdoMet synthase family. As to quaternary structure, homotetramer; dimer of dimers. Mg(2+) is required as a cofactor. The cofactor is K(+).

Its subcellular location is the cytoplasm. It carries out the reaction L-methionine + ATP + H2O = S-adenosyl-L-methionine + phosphate + diphosphate. It functions in the pathway amino-acid biosynthesis; S-adenosyl-L-methionine biosynthesis; S-adenosyl-L-methionine from L-methionine: step 1/1. Catalyzes the formation of S-adenosylmethionine (AdoMet) from methionine and ATP. The overall synthetic reaction is composed of two sequential steps, AdoMet formation and the subsequent tripolyphosphate hydrolysis which occurs prior to release of AdoMet from the enzyme. In Oenococcus oeni (strain ATCC BAA-331 / PSU-1), this protein is S-adenosylmethionine synthase.